The sequence spans 97 residues: Small integral membrane protein 8 (97 aa).

The disordered stretch occupies residues 1–24; sequence MSSAPEPPTFKKEPPKEKDFQSPG. Over residues 9–20 the composition is skewed to basic and acidic residues; that stretch reads TFKKEPPKEKDF. The helical transmembrane segment at 48–67 threads the bilayer; that stretch reads PVMAFGLVTLSLCVAYIGYL.

Belongs to the SMIM8 family.

It is found in the membrane. The polypeptide is Small integral membrane protein 8 (SMIM8) (Pongo abelii (Sumatran orangutan)).